The primary structure comprises 244 residues: CTD nuclear envelope phosphatase 1 (244 aa).

The chain crosses the membrane as a helical span at residues 7–29 (LLGLRTFVAFAAKLWSFFIYLLR). One can recognise an FCP1 homology domain in the interval 57 to 224 (AQVKRKILVL…LNLLPMLDAL (168 aa)).

The protein belongs to the dullard family. Interacts with CNEP1R1; the complex dephosphorylates LPIN1 and LPIN2. Muscle specific with lower expression in other metabolic tissues.

Its subcellular location is the endoplasmic reticulum membrane. It is found in the nucleus membrane. It carries out the reaction O-phospho-L-seryl-[protein] + H2O = L-seryl-[protein] + phosphate. The enzyme catalyses O-phospho-L-threonyl-[protein] + H2O = L-threonyl-[protein] + phosphate. Its function is as follows. Serine/threonine protein phosphatase forming with CNEP1R1 an active phosphatase complex that dephosphorylates and may activate LPIN1 and LPIN2. LPIN1 and LPIN2 are phosphatidate phosphatases that catalyze the conversion of phosphatidic acid to diacylglycerol and control the metabolism of fatty acids at different levels. May indirectly modulate the lipid composition of nuclear and/or endoplasmic reticulum membranes and be required for proper nuclear membrane morphology and/or dynamics. May also indirectly regulate the production of lipid droplets and triacylglycerol. May antagonize BMP signaling. This Mus musculus (Mouse) protein is CTD nuclear envelope phosphatase 1 (Ctdnep1).